A 198-amino-acid chain; its full sequence is Ribonuclease HII (198 aa).

The 185-residue stretch at 14 to 198 (HMIVGVDEAG…FAPVAQLQLV (185 aa)) folds into the RNase H type-2 domain. Positions 20, 21, and 110 each coordinate a divalent metal cation.

Belongs to the RNase HII family. Mn(2+) is required as a cofactor. It depends on Mg(2+) as a cofactor.

The protein localises to the cytoplasm. The catalysed reaction is Endonucleolytic cleavage to 5'-phosphomonoester.. Its function is as follows. Endonuclease that specifically degrades the RNA of RNA-DNA hybrids. This is Ribonuclease HII from Sphingopyxis alaskensis (strain DSM 13593 / LMG 18877 / RB2256) (Sphingomonas alaskensis).